Here is a 279-residue protein sequence, read N- to C-terminus: Beta-porphyranase E (279 aa).

Positions Met1 to Gly18 are cleaved as a signal peptide. Residues Gln19–Val277 form the GH16 domain. Substrate contacts are provided by Trp56, Arg60, Glu141, Glu146, and Glu243. Glu141 functions as the Nucleophile in the catalytic mechanism. The active-site Proton donor is Glu146.

This sequence belongs to the glycosyl hydrolase 16 family.

The protein localises to the periplasm. It catalyses the reaction Hydrolysis of beta-D-galactopyranose-(1-&gt;4)-alpha-L-galactopyranose-6-sulfate linkages in porphyran.. In terms of biological role, cleaves the sulfated polysaccharide porphyran at the (1-&gt;4) linkages between beta-D-galactopyranose and alpha-L-galactopyranose-6-sulfate, forming mostly the disaccharide alpha-L-galactopyranose-6-sulfate-(1-&gt;3)-beta-D-galactose. The chain is Beta-porphyranase E (porE) from Zobellia galactanivorans (strain DSM 12802 / CCUG 47099 / CIP 106680 / NCIMB 13871 / Dsij).